The chain runs to 258 residues: UPF0246 protein ABO_1338 (258 aa).

The protein belongs to the UPF0246 family.

In Alcanivorax borkumensis (strain ATCC 700651 / DSM 11573 / NCIMB 13689 / SK2), this protein is UPF0246 protein ABO_1338.